We begin with the raw amino-acid sequence, 187 residues long: Elongation factor P (187 aa).

This sequence belongs to the elongation factor P family.

Its subcellular location is the cytoplasm. It participates in protein biosynthesis; polypeptide chain elongation. Involved in peptide bond synthesis. Stimulates efficient translation and peptide-bond synthesis on native or reconstituted 70S ribosomes in vitro. Probably functions indirectly by altering the affinity of the ribosome for aminoacyl-tRNA, thus increasing their reactivity as acceptors for peptidyl transferase. This is Elongation factor P from Sphingopyxis alaskensis (strain DSM 13593 / LMG 18877 / RB2256) (Sphingomonas alaskensis).